Here is a 213-residue protein sequence, read N- to C-terminus: Outer-membrane lipoprotein carrier protein (213 aa).

The N-terminal stretch at 1–23 (MKKLLKQSLLGFALVSMTGAAFA) is a signal peptide.

The protein belongs to the LolA family. In terms of assembly, monomer.

It localises to the periplasm. Participates in the translocation of lipoproteins from the inner membrane to the outer membrane. Only forms a complex with a lipoprotein if the residue after the N-terminal Cys is not an aspartate (The Asp acts as a targeting signal to indicate that the lipoprotein should stay in the inner membrane). This chain is Outer-membrane lipoprotein carrier protein, found in Actinobacillus pleuropneumoniae serotype 7 (strain AP76).